Here is a 370-residue protein sequence, read N- to C-terminus: S-adenosylmethionine:tRNA ribosyltransferase-isomerase (370 aa).

The protein belongs to the QueA family. As to quaternary structure, monomer.

It localises to the cytoplasm. The catalysed reaction is 7-aminomethyl-7-carbaguanosine(34) in tRNA + S-adenosyl-L-methionine = epoxyqueuosine(34) in tRNA + adenine + L-methionine + 2 H(+). Its pathway is tRNA modification; tRNA-queuosine biosynthesis. Functionally, transfers and isomerizes the ribose moiety from AdoMet to the 7-aminomethyl group of 7-deazaguanine (preQ1-tRNA) to give epoxyqueuosine (oQ-tRNA). The sequence is that of S-adenosylmethionine:tRNA ribosyltransferase-isomerase from Synechococcus sp. (strain WH7803).